A 234-amino-acid chain; its full sequence is Octanoyltransferase (234 aa).

Positions 35 to 221 (DGAPELVWFL…AFQQVFASPL (187 aa)) constitute a BPL/LPL catalytic domain. Residues 74-81 (RGGQYTYH), 150-152 (AIG), and 163-165 (GIS) each bind substrate. The active-site Acyl-thioester intermediate is the Cys-181.

Belongs to the LipB family.

The protein resides in the cytoplasm. The catalysed reaction is octanoyl-[ACP] + L-lysyl-[protein] = N(6)-octanoyl-L-lysyl-[protein] + holo-[ACP] + H(+). The protein operates within protein modification; protein lipoylation via endogenous pathway; protein N(6)-(lipoyl)lysine from octanoyl-[acyl-carrier-protein]: step 1/2. Its function is as follows. Catalyzes the transfer of endogenously produced octanoic acid from octanoyl-acyl-carrier-protein onto the lipoyl domains of lipoate-dependent enzymes. Lipoyl-ACP can also act as a substrate although octanoyl-ACP is likely to be the physiological substrate. This is Octanoyltransferase from Hyphomonas neptunium (strain ATCC 15444).